A 470-amino-acid chain; its full sequence is tRNA-2-methylthio-N(6)-dimethylallyladenosine synthase (470 aa).

In terms of domain architecture, MTTase N-terminal spans 20-138 (PRVHIETFGC…LPELVERARS (119 aa)). The [4Fe-4S] cluster site is built by Cys29, Cys65, Cys99, Cys176, Cys180, and Cys183. The Radical SAM core domain occupies 162 to 398 (REGDLKAWVT…MEVQNRIARA (237 aa)). One can recognise a TRAM domain in the interval 401 to 464 (EARVGKVYDI…TWTLEGELVE (64 aa)).

The protein belongs to the methylthiotransferase family. MiaB subfamily. In terms of assembly, monomer. Requires [4Fe-4S] cluster as cofactor.

It localises to the cytoplasm. The catalysed reaction is N(6)-dimethylallyladenosine(37) in tRNA + (sulfur carrier)-SH + AH2 + 2 S-adenosyl-L-methionine = 2-methylsulfanyl-N(6)-dimethylallyladenosine(37) in tRNA + (sulfur carrier)-H + 5'-deoxyadenosine + L-methionine + A + S-adenosyl-L-homocysteine + 2 H(+). Its function is as follows. Catalyzes the methylthiolation of N6-(dimethylallyl)adenosine (i(6)A), leading to the formation of 2-methylthio-N6-(dimethylallyl)adenosine (ms(2)i(6)A) at position 37 in tRNAs that read codons beginning with uridine. This is tRNA-2-methylthio-N(6)-dimethylallyladenosine synthase from Symbiobacterium thermophilum (strain DSM 24528 / JCM 14929 / IAM 14863 / T).